A 204-amino-acid polypeptide reads, in one-letter code: Golgi to ER traffic protein 1 (204 aa).

The Lumenal portion of the chain corresponds to 1–11 (MLTLDIDPYTI). The helical transmembrane segment at 12 to 31 (LVTSFLILAIQKLVTVIGKQ) threads the bilayer. Topologically, residues 32-116 (KIQLYIWQIY…RIDSITKLAI (85 aa)) are cytoplasmic. Positions 78 to 113 (AKWTKINRALDKLKLEVQELNETIAGEKTRIDSITK) form a coiled coil. A helical transmembrane segment spans residues 117 to 137 (TLILTLPIWFLRIFCRKTALL). Topologically, residues 138 to 161 (YIRKGILPAYLEWWLALPFFKSGT) are lumenal. A helical transmembrane segment spans residues 162–178 (IGLTCWMFVVNSVLSNL). The Cytoplasmic portion of the chain corresponds to 179–204 (IFLISFPFTQKVERPIKPKNEQKTES).

Belongs to the WRB/GET1 family. In terms of assembly, component of the Golgi to ER traffic (GET) complex, which is composed of GET1, GET2 and GET3. Within the complex, GET1 and GET2 form a heterotetramer which is stabilized by phosphatidylinositol binding and which binds to the GET3 homodimer.

The protein localises to the endoplasmic reticulum membrane. It is found in the golgi apparatus membrane. In terms of biological role, required for the post-translational delivery of tail-anchored (TA) proteins to the endoplasmic reticulum. Together with GET2, acts as a membrane receptor for soluble GET3, which recognizes and selectively binds the transmembrane domain of TA proteins in the cytosol. The GET complex cooperates with the HDEL receptor ERD2 to mediate the ATP-dependent retrieval of resident ER proteins that contain a C-terminal H-D-E-L retention signal from the Golgi to the ER. In Lodderomyces elongisporus (strain ATCC 11503 / CBS 2605 / JCM 1781 / NBRC 1676 / NRRL YB-4239) (Yeast), this protein is Golgi to ER traffic protein 1.